We begin with the raw amino-acid sequence, 336 residues long: Isopentenyl-diphosphate delta-isomerase (336 aa).

5-6 (RK) is a substrate binding site. FMN is bound by residues 60–62 (AMT), Ser90, and Asn117. Gln147 lines the substrate pocket. Glu148 is a Mg(2+) binding site. FMN is bound by residues Lys179, Ser204, Thr209, 253–255 (GVR), and 274–275 (SR).

The protein belongs to the IPP isomerase type 2 family. As to quaternary structure, homooctamer. Dimer of tetramers. Requires FMN as cofactor. It depends on NADPH as a cofactor. Mg(2+) serves as cofactor.

It localises to the cytoplasm. The enzyme catalyses isopentenyl diphosphate = dimethylallyl diphosphate. In terms of biological role, involved in the biosynthesis of isoprenoids. Catalyzes the 1,3-allylic rearrangement of the homoallylic substrate isopentenyl (IPP) to its allylic isomer, dimethylallyl diphosphate (DMAPP). The polypeptide is Isopentenyl-diphosphate delta-isomerase (Streptococcus pneumoniae (strain 70585)).